Here is a 196-residue protein sequence, read N- to C-terminus: Cytochrome c biogenesis ATP-binding export protein CcmA (196 aa).

In terms of domain architecture, ABC transporter spans 2–195; the sequence is LSFHQLKFNI…HIKSAQILQL (194 aa). 34-41 provides a ligand contact to ATP; it reads GANGCGKT.

Belongs to the ABC transporter superfamily. CcmA exporter (TC 3.A.1.107) family. In terms of assembly, the complex is composed of two ATP-binding proteins (CcmA) and two transmembrane proteins (CcmB).

It localises to the cell inner membrane. It catalyses the reaction heme b(in) + ATP + H2O = heme b(out) + ADP + phosphate + H(+). Its function is as follows. Part of the ABC transporter complex CcmAB involved in the biogenesis of c-type cytochromes; once thought to export heme, this seems not to be the case, but its exact role is uncertain. Responsible for energy coupling to the transport system. This chain is Cytochrome c biogenesis ATP-binding export protein CcmA, found in Rickettsia bellii (strain RML369-C).